The primary structure comprises 1182 residues: DNA-directed RNA polymerase subunit beta' (1182 aa).

Residues cysteine 59, cysteine 61, cysteine 74, and cysteine 77 each coordinate Zn(2+). Residues aspartate 449, aspartate 451, and aspartate 453 each coordinate Mg(2+). Residues cysteine 794, cysteine 868, cysteine 875, and cysteine 878 each coordinate Zn(2+).

It belongs to the RNA polymerase beta' chain family. The RNAP catalytic core consists of 2 alpha, 1 beta, 1 beta' and 1 omega subunit. When a sigma factor is associated with the core the holoenzyme is formed, which can initiate transcription. The cofactor is Mg(2+). Zn(2+) serves as cofactor.

It carries out the reaction RNA(n) + a ribonucleoside 5'-triphosphate = RNA(n+1) + diphosphate. In terms of biological role, DNA-dependent RNA polymerase catalyzes the transcription of DNA into RNA using the four ribonucleoside triphosphates as substrates. The protein is DNA-directed RNA polymerase subunit beta' of Clostridium acetobutylicum (strain ATCC 824 / DSM 792 / JCM 1419 / IAM 19013 / LMG 5710 / NBRC 13948 / NRRL B-527 / VKM B-1787 / 2291 / W).